Reading from the N-terminus, the 257-residue chain is Imidazole glycerol phosphate synthase subunit hisF1 (257 aa).

Active-site residues include aspartate 11 and aspartate 130.

Belongs to the HisA/HisF family. Heterodimer of HisH and HisF.

The protein resides in the cytoplasm. The catalysed reaction is 5-[(5-phospho-1-deoxy-D-ribulos-1-ylimino)methylamino]-1-(5-phospho-beta-D-ribosyl)imidazole-4-carboxamide + L-glutamine = D-erythro-1-(imidazol-4-yl)glycerol 3-phosphate + 5-amino-1-(5-phospho-beta-D-ribosyl)imidazole-4-carboxamide + L-glutamate + H(+). It participates in amino-acid biosynthesis; L-histidine biosynthesis; L-histidine from 5-phospho-alpha-D-ribose 1-diphosphate: step 5/9. Its function is as follows. IGPS catalyzes the conversion of PRFAR and glutamine to IGP, AICAR and glutamate. The HisF subunit catalyzes the cyclization activity that produces IGP and AICAR from PRFAR using the ammonia provided by the HisH subunit. In Vibrio vulnificus (strain YJ016), this protein is Imidazole glycerol phosphate synthase subunit hisF1 (hisF1).